The chain runs to 767 residues: DNA topoisomerase 1 (767 aa).

The segment covering 1 to 23 has biased composition (basic and acidic residues); that stretch reads MSGDHLHNDSQIEADFRLNDSHK. Residues 1-201 form a disordered region; the sequence is MSGDHLHNDS…NKKKKPKKEE (201 aa). Serine 2 carries the N-acetylserine modification. A phosphoserine mark is found at serine 2 and serine 10. The segment covering 24-39 has biased composition (basic residues); sequence HKDKHKDREHRHKEHK. The span at 40–110 shows a compositional bias: basic and acidic residues; sequence KDKEKDREKS…DAKIKKEKEN (71 aa). At serine 59 the chain carries Phosphoserine. Residue lysine 103 forms a Glycyl lysine isopeptide (Lys-Gly) (interchain with G-Cter in SUMO2) linkage. A Glycyl lysine isopeptide (Lys-Gly) (interchain with G-Cter in SUMO); alternate cross-link involves residue lysine 105. Residue lysine 105 forms a Glycyl lysine isopeptide (Lys-Gly) (interchain with G-Cter in SUMO2); alternate linkage. Serine 114 is subject to Phosphoserine. A Glycyl lysine isopeptide (Lys-Gly) (interchain with G-Cter in SUMO); alternate cross-link involves residue lysine 119. Lysine 119 is covalently cross-linked (Glycyl lysine isopeptide (Lys-Gly) (interchain with G-Cter in SUMO2); alternate). A Glycyl lysine isopeptide (Lys-Gly) (interchain with G-Cter in SUMO1); alternate cross-link involves residue lysine 119. Basic and acidic residues predominate over residues 131–168; it reads PKEDIKPLKRPRDEDDADYKPKKIKTEDIKKEKKRKLE. Residues lysine 136 and lysine 150 each participate in a glycyl lysine isopeptide (Lys-Gly) (interchain with G-Cter in SUMO2) cross-link. Residue lysine 155 forms a Glycyl lysine isopeptide (Lys-Gly) (interchain with G-Cter in SUMO); alternate linkage. A Glycyl lysine isopeptide (Lys-Gly) (interchain with G-Cter in SUMO2); alternate cross-link involves residue lysine 155. Glycyl lysine isopeptide (Lys-Gly) (interchain with G-Cter in SUMO2) cross-links involve residues lysine 160 and lysine 166. Lysine 174 is covalently cross-linked (Glycyl lysine isopeptide (Lys-Gly) (interchain with G-Cter in SUMO2); alternate). The residue at position 174 (lysine 174) is an N6-acetyllysine; alternate. The segment covering 181–201 has biased composition (basic and acidic residues); it reads KDKDKKGAESDNKKKKPKKEE. Lysine 206 participates in a covalent cross-link: Glycyl lysine isopeptide (Lys-Gly) (interchain with G-Cter in SUMO2). Position 282 is an N6-acetyllysine (lysine 282). Lysine 338 participates in a covalent cross-link: Glycyl lysine isopeptide (Lys-Gly) (interchain with G-Cter in SUMO2). Interaction with DNA regions lie at residues 427-428 and 490-495; these read KY and RAGNEK. The Topo IB-type catalytic domain occupies 434–767; it reads SSRIKGEKDW…IDMTDEDYEF (334 aa). Residue serine 508 is modified to Phosphoserine; by CK2. Lysine 551 is covalently cross-linked (Glycyl lysine isopeptide (Lys-Gly) (interchain with G-Cter in SUMO2)). The segment at 587–589 is interaction with DNA; that stretch reads TAK. Residues lysine 644, lysine 702, and lysine 714 each participate in a glycyl lysine isopeptide (Lys-Gly) (interchain with G-Cter in SUMO2) cross-link. Tyrosine 725 serves as the catalytic O-(3'-phospho-DNA)-tyrosine intermediate.

It belongs to the type IB topoisomerase family. Monomer. Interacts with ERCC6. Interacts with TPRN; TPRN interacts with a number of DNA damage response proteins, is recruited to sites of DNA damage and may play a role in DNA damage repair. Post-translationally, sumoylated. Lys-119 is the main site of sumoylation. Sumoylation plays a role in partitioning TOP1 between nucleoli and nucleoplasm. Levels are dramatically increased on camptothecin (CPT) treatment. Phosphorylation at Ser-508 by CK2 increases binding to supercoiled DNA and sensitivity to camptothecin.

It localises to the nucleus. It is found in the nucleolus. Its subcellular location is the nucleoplasm. It carries out the reaction ATP-independent breakage of single-stranded DNA, followed by passage and rejoining.. Specifically inhibited by camptothecin (CPT), a plant alkaloid with antitumor activity. In terms of biological role, releases the supercoiling and torsional tension of DNA introduced during the DNA replication and transcription by transiently cleaving and rejoining one strand of the DNA duplex. Introduces a single-strand break via transesterification at a target site in duplex DNA. The scissile phosphodiester is attacked by the catalytic tyrosine of the enzyme, resulting in the formation of a DNA-(3'-phosphotyrosyl)-enzyme intermediate and the expulsion of a 5'-OH DNA strand. The free DNA strand then rotates around the intact phosphodiester bond on the opposing strand, thus removing DNA supercoils. Finally, in the religation step, the DNA 5'-OH attacks the covalent intermediate to expel the active-site tyrosine and restore the DNA phosphodiester backbone. Regulates the alternative splicing of tissue factor (F3) pre-mRNA in endothelial cells. Involved in the circadian transcription of the core circadian clock component BMAL1 by altering the chromatin structure around the ROR response elements (ROREs) on the BMAL1 promoter. In Cricetulus griseus (Chinese hamster), this protein is DNA topoisomerase 1 (TOP1).